The chain runs to 288 residues: 4-hydroxy-tetrahydrodipicolinate synthase (288 aa).

Thr-42 contributes to the pyruvate binding site. Tyr-129 serves as the catalytic Proton donor/acceptor. Lys-157 functions as the Schiff-base intermediate with substrate in the catalytic mechanism. Position 198 (Ile-198) interacts with pyruvate.

The protein belongs to the DapA family. Homotetramer; dimer of dimers.

Its subcellular location is the cytoplasm. The enzyme catalyses L-aspartate 4-semialdehyde + pyruvate = (2S,4S)-4-hydroxy-2,3,4,5-tetrahydrodipicolinate + H2O + H(+). It functions in the pathway amino-acid biosynthesis; L-lysine biosynthesis via DAP pathway; (S)-tetrahydrodipicolinate from L-aspartate: step 3/4. Catalyzes the condensation of (S)-aspartate-beta-semialdehyde [(S)-ASA] and pyruvate to 4-hydroxy-tetrahydrodipicolinate (HTPA). The sequence is that of 4-hydroxy-tetrahydrodipicolinate synthase from Chlamydia abortus (strain DSM 27085 / S26/3) (Chlamydophila abortus).